Reading from the N-terminus, the 50-residue chain is MPRDIITFQCTECKNRNYTSTKNKKTTTERLEMKKFCRHCRKHQGHKEIK.

This sequence belongs to the bacterial ribosomal protein bL33 family.

The protein is Large ribosomal subunit protein bL33 of Solibacter usitatus (strain Ellin6076).